Consider the following 462-residue polypeptide: MSLPEAYQLEIQALNKQVLQTCPSDILQFCADFFNSRLATERAASISLFRDRGTPSPRFPPSPTNPHFGMMSSQFSSPFGANANPFGGSSSNPNPFGGSASPMSSSVMHRVVEEDESDNHLAPGGSLFSGAFGGDASTEAPPTLRAPPTTDSYPAQYNFSRRTSVSAESLKPSADGFDNWTPPYTDKTPEQVERLKYAIEGNFLFSHLDDEQSAQILGALVEKPIPARGIKVISQGDAGDYFYVVERGSFDVYVNDCGFIEPGPDGLGNKVGTIQAGGSFGELALMYNAPRAATIISAEGSCTLWALDRVTFRRILMESTFARRRMYENFLEEVPILSSLTPYERSKISDALETQKFAPGDVIIHEGDPGHSFYLLESGEAAAFKGEEQVLSYKKGDFFGELALLNDAPRAASVIATSDVKVATLGKNAFQRLLGPVEGLLRRTRYLGVKTGVEEMDPLHTQ.

Positions Thr54–Phe203 are dimerization and phosphorylation. Positions Phe79–Tyr157 are disordered. The segment covering Gly80–Pro102 has biased composition (low complexity). Residue Ser164 is modified to Phosphoserine. 3',5'-cyclic AMP-binding positions include Leu204–Glu333, Glu282, Arg291, Ile336–Val453, Glu401, and Arg410.

It belongs to the cAMP-dependent kinase regulatory chain family. As to quaternary structure, tetramer, composed of 2 regulatory (R) and 2 catalytic (C) subunits. In the presence of cAMP it dissociates into 2 active monomeric C subunits and an R dimer.

The chain is cAMP-dependent protein kinase regulatory subunit (pkar1) from Hypocrea atroviridis (Trichoderma atroviride).